A 227-amino-acid chain; its full sequence is Response regulator protein TodT (227 aa).

One can recognise a Response regulatory domain in the interval 28 to 142 (VIYILDDDNA…ELLGAIRAAL (115 aa)). Position 77 is a 4-aspartylphosphate (D77). The HTH luxR-type domain maps to 158 to 223 (LKENYESLSK…DLVRVTERLK (66 aa)). The H-T-H motif DNA-binding region spans 182–201 (NKQTALELDISEATVKVHRH).

In terms of processing, phosphorylated by TodS.

The protein resides in the cytoplasm. Functionally, member of the two-component regulatory system TodS/TodT involved in the regulation of toluene degradation. Phosphorylated TodT activates transcription of the tod operon (todXFC1C2BADEGIH). Binds specifically to a 6-bp palindromic DNA structure in the tod promoter region. This Pseudomonas putida (strain ATCC 700007 / DSM 6899 / JCM 31910 / BCRC 17059 / LMG 24140 / F1) protein is Response regulator protein TodT (todT).